The sequence spans 292 residues: Short chain dehydrogenase mpl6 (292 aa).

NADP(+)-binding residues include Val-37, Asp-95, Asn-122, Arg-156, Tyr-188, Lys-192, Val-221, and Thr-223. The active-site Proton donor is Tyr-188. Lys-192 (lowers pKa of active site Tyr) is an active-site residue.

This sequence belongs to the short-chain dehydrogenases/reductases (SDR) family.

It participates in mycotoxin biosynthesis. Functionally, short chain dehydrogenase; part of the gene cluster that mediates the biosynthesis of the mycotoxin citrinin, a hepato-nephrotoxic compound to humans due to inhibition of respiration complex III. The pathway begins with the synthesis of a keto-aldehyde intermediate by the citrinin PKS (pksCT) from successive condensations of 4 malonyl-CoA units, presumably with a simple acetyl-CoA starter unit. Release of the keto-aldehyde intermediate is consistent with the presence of the C-terminal reductive release domain. Mp11 collaborates with pksCT by catalyzing the hydrolysis of ACP-bound acyl intermediates to free the ACP from stalled intermediates. Mpl2 then catalyzes the oxidation of the C-12 methyl of the ketone intermediate to an alcohol intermediate which is further oxidized by the oxidoreductase mpl7 to produce a bisaldehyde intermediate. The fourth catalytic step is catalyzed by the mpl4 aldehyde dehydrogenase. The final transformation is the reduction of C-3 by mpl6 to provide the chemically stable citrinin nucleus. The protein is Short chain dehydrogenase mpl6 of Monascus purpureus (Red mold).